Here is a 279-residue protein sequence, read N- to C-terminus: Uroplakin-3b (279 aa).

A signal peptide spans 1–26 (MGLPSRQPRLWLLLLVVLGWPQPCLT). At 27-200 (LDLIPYTPRI…DTWPGRRSGD (174 aa)) the chain is on the lumenal side. N-linked (GlcNAc...) asparagine glycosylation is present at asparagine 77. A helical membrane pass occupies residues 201–221 (MIIITSILSSLAGLLLLAFLA). Residues 222–279 (ASSVRFSSLWWPEEAPEQLRIGSFMGKRYMTHHIPPSEAATLPVGCEPGLERFPSLSP) lie on the Cytoplasmic side of the membrane.

This sequence belongs to the uroplakin-3 family. As to quaternary structure, heterodimer with uroplakin-1B (UPK1B). In terms of tissue distribution, expression is urothelium-specific.

Its subcellular location is the cell membrane. Component of the asymmetric unit membrane (AUM); a highly specialized biomembrane elaborated by terminally differentiated urothelial cells. May play an important role in AUM-cytoskeleton interaction in terminally differentiated urothelial cells. It also contributes to the formation of urothelial glycocalyx which may play an important role in preventing bacterial adherence. In Bos taurus (Bovine), this protein is Uroplakin-3b (UPK3B).